The primary structure comprises 101 residues: Large ribosomal subunit protein uL24 (101 aa).

The protein belongs to the universal ribosomal protein uL24 family. In terms of assembly, part of the 50S ribosomal subunit.

Its function is as follows. One of two assembly initiator proteins, it binds directly to the 5'-end of the 23S rRNA, where it nucleates assembly of the 50S subunit. Functionally, one of the proteins that surrounds the polypeptide exit tunnel on the outside of the subunit. This is Large ribosomal subunit protein uL24 from Thermobifida fusca (strain YX).